The chain runs to 135 residues: uncharacterized protein (135 aa).

An HTH hxlR-type domain is found at 25–123; that stretch reads CPIQHVVDLL…LGSDWLEQES (99 aa).

This is an uncharacterized protein from Synechocystis sp. (strain ATCC 27184 / PCC 6803 / Kazusa).